Consider the following 225-residue polypeptide: MKQVFPNDWQEILADELEKTYYHTLRQFIANEYSTQTIYPPMQDVMNAFYTTAYQDVKVIILGQDPYHGPNQAHGLSFSVKPGIPHPPSLRNMLQELQDDLGCPIPQDGTLTKWAEQGVMLLNTVLTVRAGQANSHKDQGWEQFTDAVIDKLAAREEPLIFVLWGKPAQRKKQLICKHATPHVILEAPHPSPLSAYRGFFGSKPYSKINQQLVEWDKRPIDWCLA.

Asp65 acts as the Proton acceptor in catalysis.

This sequence belongs to the uracil-DNA glycosylase (UDG) superfamily. UNG family.

Its subcellular location is the cytoplasm. The enzyme catalyses Hydrolyzes single-stranded DNA or mismatched double-stranded DNA and polynucleotides, releasing free uracil.. In terms of biological role, excises uracil residues from the DNA which can arise as a result of misincorporation of dUMP residues by DNA polymerase or due to deamination of cytosine. The sequence is that of Uracil-DNA glycosylase from Lysinibacillus sphaericus (strain C3-41).